Reading from the N-terminus, the 134-residue chain is Rhoptry antigen protein (134 aa).

2 disordered regions span residues 21–82 and 96–134; these read MGPL…SNLK and QLDK…ENEL. Over residues 29 to 38 the composition is skewed to polar residues; that stretch reads KSTSAASTSD. Low complexity predominate over residues 39–54; it reads ELSGSEGPSTESTSTG. Basic and acidic residues predominate over residues 57–69; sequence GEDKTTDNTYKEM. Basic residues predominate over residues 102-113; sequence PKKKKSKRKKKR. Residues 114–126 show a composition bias toward basic and acidic residues; that stretch reads DSSSDRILLEESK.

In Plasmodium falciparum, this protein is Rhoptry antigen protein.